Consider the following 336-residue polypeptide: 4-hydroxy-3-methylbut-2-enyl diphosphate reductase (336 aa).

Cys37 serves as a coordination point for [4Fe-4S] cluster. Residues His66 and His99 each coordinate (2E)-4-hydroxy-3-methylbut-2-enyl diphosphate. His66 and His99 together coordinate dimethylallyl diphosphate. Positions 66 and 99 each coordinate isopentenyl diphosphate. [4Fe-4S] cluster is bound at residue Cys121. Position 149 (His149) interacts with (2E)-4-hydroxy-3-methylbut-2-enyl diphosphate. A dimethylallyl diphosphate-binding site is contributed by His149. Isopentenyl diphosphate is bound at residue His149. The active-site Proton donor is Glu151. Thr189 contacts (2E)-4-hydroxy-3-methylbut-2-enyl diphosphate. Cys219 provides a ligand contact to [4Fe-4S] cluster. (2E)-4-hydroxy-3-methylbut-2-enyl diphosphate contacts are provided by Ser247, Ser248, Asn249, and Ser292. The dimethylallyl diphosphate site is built by Ser247, Ser248, Asn249, and Ser292. The isopentenyl diphosphate site is built by Ser247, Ser248, Asn249, and Ser292.

The protein belongs to the IspH family. [4Fe-4S] cluster is required as a cofactor.

The enzyme catalyses isopentenyl diphosphate + 2 oxidized [2Fe-2S]-[ferredoxin] + H2O = (2E)-4-hydroxy-3-methylbut-2-enyl diphosphate + 2 reduced [2Fe-2S]-[ferredoxin] + 2 H(+). The catalysed reaction is dimethylallyl diphosphate + 2 oxidized [2Fe-2S]-[ferredoxin] + H2O = (2E)-4-hydroxy-3-methylbut-2-enyl diphosphate + 2 reduced [2Fe-2S]-[ferredoxin] + 2 H(+). It participates in isoprenoid biosynthesis; dimethylallyl diphosphate biosynthesis; dimethylallyl diphosphate from (2E)-4-hydroxy-3-methylbutenyl diphosphate: step 1/1. Its pathway is isoprenoid biosynthesis; isopentenyl diphosphate biosynthesis via DXP pathway; isopentenyl diphosphate from 1-deoxy-D-xylulose 5-phosphate: step 6/6. Functionally, catalyzes the conversion of 1-hydroxy-2-methyl-2-(E)-butenyl 4-diphosphate (HMBPP) into a mixture of isopentenyl diphosphate (IPP) and dimethylallyl diphosphate (DMAPP). Acts in the terminal step of the DOXP/MEP pathway for isoprenoid precursor biosynthesis. This Rhodococcus opacus (strain B4) protein is 4-hydroxy-3-methylbut-2-enyl diphosphate reductase.